Consider the following 222-residue polypeptide: MEIKLNKYIDHTLLKPEATKQDIINLCNQAIQYDFATVCVNTCWTSFCKELLKNSNVGITNVVGFPLGACLTEVKVFEVKKAIENGCDEIDMVLNIGALKDKDYDLVLNDMKEVKKAANDHVVKVILENCLLTREEIIKACELAVEAGLEFVKTSTGFNKSGANIEDIKLMSKVVKNKAQVKAAGGVRTYDDAIAMINAGASRLGTSGSVEIMLKQENKSNY.

The Proton donor/acceptor role is filled by Asp-91. Lys-153 (schiff-base intermediate with acetaldehyde) is an active-site residue. The active-site Proton donor/acceptor is Lys-182.

Belongs to the DeoC/FbaB aldolase family. DeoC type 1 subfamily.

Its subcellular location is the cytoplasm. It catalyses the reaction 2-deoxy-D-ribose 5-phosphate = D-glyceraldehyde 3-phosphate + acetaldehyde. Its pathway is carbohydrate degradation; 2-deoxy-D-ribose 1-phosphate degradation; D-glyceraldehyde 3-phosphate and acetaldehyde from 2-deoxy-alpha-D-ribose 1-phosphate: step 2/2. In terms of biological role, catalyzes a reversible aldol reaction between acetaldehyde and D-glyceraldehyde 3-phosphate to generate 2-deoxy-D-ribose 5-phosphate. The chain is Deoxyribose-phosphate aldolase from Mycoplasma capricolum subsp. capricolum (strain California kid / ATCC 27343 / NCTC 10154).